The chain runs to 221 residues: Protein FixW (221 aa).

Positions 5–156 (LNLGSPAPPI…LPKVIDGNWR (152 aa)) constitute a Thioredoxin domain. The cysteines at positions 43 and 46 are disulfide-linked.

It belongs to the thioredoxin family.

The sequence is that of Protein FixW (fixW) from Rhizobium leguminosarum.